The primary structure comprises 220 residues: MGEPTPTPAATYSAADPTSAPKLADLAAIKYSPITSSIATPEEIKAITQLWVNNLGLPADTVGTAAIDLARAYADVGASKSATLLGFCPTKPDVRRAALAAQIFVANVTPRQFCAYYAKVVWNLMLATNDPPANWAKAGFQEDTRFAAFDFFDAVDSTGALEPAECSAAPLTATCALDREVRRPCPSAYPERQPHHQHCRGHQGPSWLHQHSLRSACTPY.

It belongs to the potexvirus capsid protein family.

Its subcellular location is the virion. Functionally, required for genome encapsidation. Forms ribonucleoprotein complexes along with TGB1 helicase and viral RNA. This is Coat protein from Cattleya (Nun's hood orchid).